Reading from the N-terminus, the 77-residue chain is U8-lycotoxin-Ls1a (77 aa).

The signal sequence occupies residues 1–20 (MKLIIFTGLVLFAIVSLIEA). A propeptide spanning residues 21 to 26 (QAENEK) is cleaved from the precursor.

The protein belongs to the neurotoxin 19 (CSTX) family. 08 (U8-Lctx) subfamily. Post-translationally, contains 4 disulfide bonds. Expressed by the venom gland.

The protein resides in the secreted. The chain is U8-lycotoxin-Ls1a from Lycosa singoriensis (Wolf spider).